The following is a 333-amino-acid chain: Casein kinase II subunit alpha-3 (333 aa).

The Protein kinase domain occupies 34-319 (YEVVRKVGRG…AREAMDHPYF (286 aa)). Residues 40–48 (VGRGKYSEV) and K63 each bind ATP. The Proton acceptor role is filled by D151.

Belongs to the protein kinase superfamily. Ser/Thr protein kinase family. CK2 subfamily. In terms of assembly, heterotetramer of two catalytic alpha subunits and two regulatory beta subunits.

It is found in the nucleus. Its subcellular location is the nucleolus. The protein localises to the cytoplasm. It carries out the reaction L-seryl-[protein] + ATP = O-phospho-L-seryl-[protein] + ADP + H(+). It catalyses the reaction L-threonyl-[protein] + ATP = O-phospho-L-threonyl-[protein] + ADP + H(+). Casein kinases are operationally defined by their preferential utilization of acidic proteins such as caseins as substrates. The alpha chain contains the catalytic site. The tetrameric holoenzyme CK2 is composed of two alpha and two beta subunits. Acts as a circadian clock component that maintains the correct period length through phosphorylation of CCA1. This is Casein kinase II subunit alpha-3 from Arabidopsis thaliana (Mouse-ear cress).